The sequence spans 344 residues: tRNA N6-adenosine threonylcarbamoyltransferase (344 aa).

Positions 111 and 115 each coordinate Fe cation. Substrate is bound by residues 133-137, D166, G179, and N283; that span reads LVSGG. Residue D311 coordinates Fe cation.

Belongs to the KAE1 / TsaD family. Fe(2+) serves as cofactor.

It localises to the cytoplasm. It carries out the reaction L-threonylcarbamoyladenylate + adenosine(37) in tRNA = N(6)-L-threonylcarbamoyladenosine(37) in tRNA + AMP + H(+). Its function is as follows. Required for the formation of a threonylcarbamoyl group on adenosine at position 37 (t(6)A37) in tRNAs that read codons beginning with adenine. Is involved in the transfer of the threonylcarbamoyl moiety of threonylcarbamoyl-AMP (TC-AMP) to the N6 group of A37, together with TsaE and TsaB. TsaD likely plays a direct catalytic role in this reaction. This chain is tRNA N6-adenosine threonylcarbamoyltransferase, found in Orientia tsutsugamushi (strain Boryong) (Rickettsia tsutsugamushi).